The chain runs to 138 residues: MSNHRILHTMLRVGDLDKSIEFYTQVMGMSLLRKNENTEYKYTLAFLGYGDESQGAVIELTYNWGVADYEKGNAYGHIAIGVDDIYATCDTIKAAGGIVTREPGPVKGGTTHIAFVKDPDGYMIELIQNKQAHAGLEG.

One can recognise a VOC domain in the interval 5 to 129 (RILHTMLRVG…DGYMIELIQN (125 aa)). H8 serves as a coordination point for Ni(2+). R12 contacts substrate. E59 contributes to the Ni(2+) binding site. Residues N63 and H77 each contribute to the substrate site. Residues H77 and E125 each coordinate Ni(2+). The Proton donor/acceptor role is filled by E125.

The protein belongs to the glyoxalase I family. It depends on Ni(2+) as a cofactor.

It catalyses the reaction (R)-S-lactoylglutathione = methylglyoxal + glutathione. It participates in secondary metabolite metabolism; methylglyoxal degradation; (R)-lactate from methylglyoxal: step 1/2. In terms of biological role, catalyzes the conversion of hemimercaptal, formed from methylglyoxal and glutathione, to S-lactoylglutathione. This chain is Probable lactoylglutathione lyase (gloA), found in Vibrio cholerae serotype O1 (strain ATCC 39315 / El Tor Inaba N16961).